The chain runs to 281 residues: Elongation factor Ts (281 aa).

The interval 86 to 89 is involved in Mg(2+) ion dislocation from EF-Tu; it reads TDFV.

The protein belongs to the EF-Ts family.

Its subcellular location is the cytoplasm. Functionally, associates with the EF-Tu.GDP complex and induces the exchange of GDP to GTP. It remains bound to the aminoacyl-tRNA.EF-Tu.GTP complex up to the GTP hydrolysis stage on the ribosome. In Beutenbergia cavernae (strain ATCC BAA-8 / DSM 12333 / CCUG 43141 / JCM 11478 / NBRC 16432 / NCIMB 13614 / HKI 0122), this protein is Elongation factor Ts.